The sequence spans 409 residues: Elongation factor Tu (409 aa).

The region spanning 10 to 214 is the tr-type G domain; it reads KPHVNVGTIG…AVDSYIPTPE (205 aa). Residues 19-26 are G1; sequence GHVDHGKT. Position 19-26 (19-26) interacts with GTP; it reads GHVDHGKT. T26 contacts Mg(2+). The interval 60 to 64 is G2; sequence GITIN. The segment at 81–84 is G3; sequence DCPG. GTP-binding positions include 81 to 85 and 136 to 139; these read DCPGH and NKVD. Residues 136–139 are G4; the sequence is NKVD. Residues 174–176 are G5; it reads SAL.

This sequence belongs to the TRAFAC class translation factor GTPase superfamily. Classic translation factor GTPase family. EF-Tu/EF-1A subfamily. Monomer.

The protein resides in the cytoplasm. The catalysed reaction is GTP + H2O = GDP + phosphate + H(+). Its function is as follows. GTP hydrolase that promotes the GTP-dependent binding of aminoacyl-tRNA to the A-site of ribosomes during protein biosynthesis. This is Elongation factor Tu from Synechococcus sp. (strain JA-3-3Ab) (Cyanobacteria bacterium Yellowstone A-Prime).